The primary structure comprises 232 residues: tRNA (guanine-N(1)-)-methyltransferase (232 aa).

S-adenosyl-L-methionine contacts are provided by residues Gly114 and 134 to 139; that span reads IGDYIL.

It belongs to the RNA methyltransferase TrmD family. In terms of assembly, homodimer.

The protein resides in the cytoplasm. It catalyses the reaction guanosine(37) in tRNA + S-adenosyl-L-methionine = N(1)-methylguanosine(37) in tRNA + S-adenosyl-L-homocysteine + H(+). Functionally, specifically methylates guanosine-37 in various tRNAs. This chain is tRNA (guanine-N(1)-)-methyltransferase, found in Wolbachia pipientis subsp. Culex pipiens (strain wPip).